The following is a 554-amino-acid chain: Terpene synthase 17 (554 aa).

3 residues coordinate Mg(2+): D306, D310, and E458. The DDXXD motif signature appears at 306-310 (DDTYD).

This sequence belongs to the terpene synthase family. Tpsa subfamily. Mg(2+) serves as cofactor. The cofactor is Mn(2+). As to expression, mostly expressed in stem and trichomes, to a lower extent in leaves, flowers and roots and, at low levels, in fruits.

It carries out the reaction (2Z,6Z)-farnesyl diphosphate = beta-bisabolene + diphosphate. The catalysed reaction is (2E,6E)-farnesyl diphosphate = (+)-valencene + diphosphate. It catalyses the reaction (2E,6E)-farnesyl diphosphate = (E)-beta-farnesene + diphosphate. The enzyme catalyses (2E,6E)-farnesyl diphosphate = gamma-gurjunene + diphosphate. It carries out the reaction (2Z,6Z)-farnesyl diphosphate = (E)-gamma-bisabolene + diphosphate. The catalysed reaction is (2E)-geranyl diphosphate = limonene + diphosphate. It catalyses the reaction (2E)-geranyl diphosphate = beta-myrcene + diphosphate. The enzyme catalyses (2E)-geranyl diphosphate = (E)-beta-ocimene + diphosphate. It carries out the reaction (2E)-geranyl diphosphate = terpinolene + diphosphate. The catalysed reaction is (2E)-geranyl diphosphate = gamma-terpinene + diphosphate. It catalyses the reaction (2Z,6Z)-farnesyl diphosphate = (Z)-gamma-bisabolene + diphosphate. The enzyme catalyses (2E,6E)-farnesyl diphosphate = (1S,5S,6R)-alpha-bergamotene + diphosphate. It carries out the reaction (2Z,6Z)-farnesyl diphosphate = (1S,5S,6S)-alpha-bergamotene + diphosphate. It functions in the pathway secondary metabolite biosynthesis; terpenoid biosynthesis. In terms of biological role, sesquiterpene synthase involved in the biosynthesis of volatile compounds. Mediates the conversion of (2E,6E)-farnesyl diphosphate (FPP) into gamma-gurjunene, (E)-beta-farnesene and (+)-valencene, and of (2Z,6Z)-farnesyl diphosphate ((ZZ)-FPP) into (E)-alpha-bergamotene and (Z)-gamma-bisabolene as well as beta-bisabolene, (Z)-alpha-bergamotene and (E)-gamma-bisabolene to a lower extent. Can act with a low efficiency as a monoterpene synthase with geranyl diphosphate (GPP) as substrate, thus producing beta-myrcene, (E)-beta-ocimene, limonene, terpinolene, gamma-terpinene and (Z)-beta-ocimene. The protein is Terpene synthase 17 of Solanum lycopersicum (Tomato).